The sequence spans 87 residues: Phytosulfokines 1 (87 aa).

An N-terminal signal peptide occupies residues 1–24; that stretch reads MMKTKSEVLIFFFTLVLLLSMASS. Residues 25-76 constitute a propeptide that is removed on maturation; that stretch reads VILREDGFAPPKPSPTTHEKASTKGDRDGVECKNSDSEEECLVKKTVAAHTD. The tract at residues 31 to 59 is disordered; that stretch reads GFAPPKPSPTTHEKASTKGDRDGVECKNS. Positions 41-59 are enriched in basic and acidic residues; the sequence is THEKASTKGDRDGVECKNS. 2 positions are modified to sulfotyrosine: Y77 and Y79. Residues 82–87 constitute a propeptide that is removed on maturation; that stretch reads DLNLSP.

This sequence belongs to the phytosulfokine family. Sulfation is important for activity and for the binding to a putative membrane receptor. In terms of processing, PSK-beta is produced from PSK-alpha by exopeptidase digestion. In terms of tissue distribution, expressed only in roots.

The protein resides in the secreted. Its function is as follows. Promotes plant cell differentiation, organogenesis and somatic embryogenesis as well as cell proliferation. The chain is Phytosulfokines 1 (PSK1) from Arabidopsis thaliana (Mouse-ear cress).